Reading from the N-terminus, the 177-residue chain is Nucleoside triphosphate/diphosphate phosphatase (177 aa).

Arg-23 functions as the Proton donor in the catalytic mechanism. Positions 87, 103, 105, 107, 120, and 123 each coordinate Mg(2+).

This sequence belongs to the Ntdp family. Requires Mg(2+) as cofactor.

The catalysed reaction is a ribonucleoside 5'-triphosphate + H2O = a ribonucleoside 5'-diphosphate + phosphate + H(+). It carries out the reaction a ribonucleoside 5'-diphosphate + H2O = a ribonucleoside 5'-phosphate + phosphate + H(+). Its function is as follows. Has nucleoside phosphatase activity towards nucleoside triphosphates and nucleoside diphosphates. This is Nucleoside triphosphate/diphosphate phosphatase from Streptococcus mutans serotype c (strain ATCC 700610 / UA159).